A 70-amino-acid polypeptide reads, in one-letter code: MGSLWSKISQLFVDAFTEFLVSVVDIVIFLAILFGFTVAGWLLVFLLRVVCSALLRSRSAIHSPELSKVL.

Gly2 is lipidated: N-myristoyl glycine; by host. The segment at 2-15 (GSLWSKISQLFVDA) is endoplasmic reticulum retention signal. Over 2–25 (GSLWSKISQLFVDAFTEFLVSVVD) the chain is Virion surface. The helical transmembrane segment at 26-46 (IVIFLAILFGFTVAGWLLVFL) threads the bilayer. Residues 47–70 (LRVVCSALLRSRSAIHSPELSKVL) lie on the Intravirion side of the membrane.

It belongs to the arteriviridae E protein family. In terms of assembly, homooligomer. Associates with itself into higher-order structures, including dimers, trimers and tetramers. Associates with the GP2b-GP3-GP4 complex. In terms of processing, myristoylated. Post-translationally, not glycosylated.

It localises to the virion membrane. The protein localises to the host endoplasmic reticulum membrane. Its subcellular location is the host Golgi apparatus membrane. The protein resides in the secreted. In terms of biological role, minor envelope protein. May function as a viroporin in the virion envelope that facilitates uncoating of the virus in order to release the genomic RNA into the cytoplasm for subsequent replication. This chain is Envelope small membrane protein (GP2b), found in Sus scrofa (Pig).